Here is a 344-residue protein sequence, read N- to C-terminus: Proline-rich transmembrane protein 2 (344 aa).

2 disordered regions span residues 1–220 (MAAS…GAPP) and 233–265 (GRAHGGHPGSPRGSLSRHPSSQLAGPGVEGGEG). Over 1 to 272 (MAASSSEVSE…GEGTQKPRDY (272 aa)) the chain is Cytoplasmic. Ser-28 is modified (phosphoserine). Over residues 69 to 82 (PETTETPVETPETV) the composition is skewed to low complexity. A phosphothreonine mark is found at Thr-74 and Thr-78. A compositionally biased stretch (polar residues) spans 124–143 (AEQQSAAPPEPTSEQALQLN). Residues 151 to 162 (TSQPPPKPPLQA) show a composition bias toward pro residues. The segment covering 168 to 178 (ENPTTEVLTES) has biased composition (polar residues). Pro residues predominate over residues 201-211 (APQPHSPPSTK). At Ser-242 the chain carries Phosphoserine. Arg-244 carries the omega-N-methylarginine modification. Phosphoserine is present on residues Ser-252 and Ser-253. Residues 273 to 293 (IILAILSCFCPMWPVNIVAFA) constitute an intramembrane region (helical). Topologically, residues 294-321 (YAVMSRNSLQQGDVDGAQRLGRVAKLLS) are cytoplasmic. Residues 322 to 342 (IVALVGGVLIIIASCVINLGV) traverse the membrane as a helical segment. The Extracellular portion of the chain corresponds to 343–344 (YK).

This sequence belongs to the CD225/Dispanin family. Component of the outer core of AMPAR complex. AMPAR complex consists of an inner core made of 4 pore-forming GluA/GRIA proteins (GRIA1, GRIA2, GRIA3 and GRIA4) and 4 major auxiliary subunits arranged in a twofold symmetry. One of the two pairs of distinct binding sites is occupied either by CNIH2, CNIH3 or CACNG2, CACNG3. The other harbors CACNG2, CACNG3, CACNG4, CACNG8 or GSG1L. This inner core of AMPAR complex is complemented by outer core constituents binding directly to the GluA/GRIA proteins at sites distinct from the interaction sites of the inner core constituents. Outer core constituents include at least PRRT1, PRRT2, CKAMP44/SHISA9, FRRS1L and NRN1. The proteins of the inner and outer core serve as a platform for other, more peripherally associated AMPAR constituents. Alone or in combination, these auxiliary subunits control the gating and pharmacology of the AMPAR complex and profoundly impact their biogenesis and protein processing. Interacts with intersectin 1/ITSN1. Interacts with SNARE complex components, including SNAP25, STX1A, SYT1 and SYT2; this interaction may inhibit SNARE complex formation. In terms of tissue distribution, neuron-specific expression throughout the brain, including hippocampus (at protein level).

The protein resides in the cell membrane. The protein localises to the presynaptic cell membrane. It localises to the synapse. Its subcellular location is the cell projection. It is found in the axon. The protein resides in the cytoplasmic vesicle. The protein localises to the secretory vesicle. It localises to the synaptic vesicle membrane. Its subcellular location is the postsynaptic density membrane. It is found in the dendritic spine. Its function is as follows. As a component of the outer core of AMPAR complex, may be involved in synaptic transmission in the central nervous system. In hippocampal neurons, in presynaptic terminals, plays an important role in the final steps of neurotransmitter release, possibly by regulating Ca(2+)-sensing. In the cerebellum, may inhibit SNARE complex formation and down-regulate short-term facilitation. The protein is Proline-rich transmembrane protein 2 (Prrt2) of Rattus norvegicus (Rat).